Here is a 144-residue protein sequence, read N- to C-terminus: Mediator of RNA polymerase II transcription subunit 21 (144 aa).

This sequence belongs to the Mediator complex subunit 21 family. Component of the Mediator complex, which is composed of MED1, MED4, MED6, MED7, MED8, MED9, MED10, MED11, MED12, MED13, MED13L, MED14, MED15, MED16, MED17, MED18, MED19, MED20, MED21, MED22, MED23, MED24, MED25, MED26, MED27, MED29, MED30, MED31, CCNC, CDK8 and CDC2L6/CDK11. The MED12, MED13, CCNC and CDK8 subunits form a distinct module termed the CDK8 module. Mediator containing the CDK8 module is less active than Mediator lacking this module in supporting transcriptional activation. Individual preparations of the Mediator complex lacking one or more distinct subunits have been variously termed ARC, CRSP, DRIP, PC2, SMCC and TRAP. Interacts with PPARG. Interacts with THRA in a ligand-dependent fashion.

The protein resides in the nucleus. Component of the Mediator complex, a coactivator involved in the regulated transcription of nearly all RNA polymerase II-dependent genes. Mediator functions as a bridge to convey information from gene-specific regulatory proteins to the basal RNA polymerase II transcription machinery. Mediator is recruited to promoters by direct interactions with regulatory proteins and serves as a scaffold for the assembly of a functional preinitiation complex with RNA polymerase II and the general transcription factors. The chain is Mediator of RNA polymerase II transcription subunit 21 (MED21) from Pongo abelii (Sumatran orangutan).